The sequence spans 278 residues: Large ribosomal subunit protein uL2 (278 aa).

The interval 224–278 (VAMNPVDHPHGGGEGRTSGGRNPVTPWGVPTKGKKTRSNKRTDTFILSSRHNRKK) is disordered.

This sequence belongs to the universal ribosomal protein uL2 family. As to quaternary structure, part of the 50S ribosomal subunit. Forms a bridge to the 30S subunit in the 70S ribosome.

Functionally, one of the primary rRNA binding proteins. Required for association of the 30S and 50S subunits to form the 70S ribosome, for tRNA binding and peptide bond formation. It has been suggested to have peptidyltransferase activity; this is somewhat controversial. Makes several contacts with the 16S rRNA in the 70S ribosome. The sequence is that of Large ribosomal subunit protein uL2 from Methylorubrum extorquens (strain CM4 / NCIMB 13688) (Methylobacterium extorquens).